Here is a 261-residue protein sequence, read N- to C-terminus: Putative ketoacyl reductase (261 aa).

NADP(+) contacts are provided by Thr15, Ser16, Ile18, Arg38, Gly39, Asp63, Val64, Asn90, Tyr157, Lys161, Val190, and Thr192. Tyr157 (proton acceptor) is an active-site residue.

The protein belongs to the short-chain dehydrogenases/reductases (SDR) family. In terms of assembly, homotetramer.

It participates in antibiotic biosynthesis; actinorhodin biosynthesis. The chain is Putative ketoacyl reductase (actIII) from Streptomyces coelicolor (strain ATCC BAA-471 / A3(2) / M145).